Consider the following 2522-residue polypeptide: Neurogenic locus notch homolog protein 1 (2522 aa).

The first 19 residues, 1 to 19 (MYRIGLLVLIWSLLGLAQG), serve as a signal peptide directing secretion. EGF-like domains lie at 20 to 57 (LRCT…ERCQ), 58 to 99 (YPNP…KVCL), 102 to 140 (VDNA…DSCQ), and 141 to 177 (QADP…ATCK). Residues 20-1730 (LRCTQTAEMC…ETAKPPPPLY (1711 aa)) lie on the Extracellular side of the membrane. Cystine bridges form between Cys-22-Cys-35, Cys-29-Cys-45, Cys-47-Cys-56, Cys-62-Cys-74, Cys-68-Cys-87, Cys-89-Cys-98, Cys-106-Cys-117, Cys-111-Cys-128, Cys-130-Cys-139, Cys-145-Cys-156, Cys-150-Cys-165, Cys-167-Cys-176, Cys-183-Cys-194, Cys-188-Cys-203, Cys-205-Cys-214, Cys-221-Cys-232, Cys-226-Cys-242, Cys-244-Cys-253, Cys-260-Cys-271, Cys-265-Cys-280, Cys-282-Cys-291, Cys-298-Cys-311, Cys-305-Cys-320, Cys-322-Cys-331, Cys-338-Cys-349, Cys-343-Cys-358, Cys-360-Cys-369, Cys-375-Cys-386, Cys-380-Cys-397, Cys-399-Cys-408, Cys-415-Cys-428, Cys-422-Cys-437, and Cys-439-Cys-448. The 37-residue stretch at 179–215 (DINECSQNPCRNGGQCLNEFGSYRCNCQNRFTGRNCE) folds into the EGF-like 5; calcium-binding domain. Positions 217-254 (PYVPCNPSPCLNGGTCRQTDDTSYECTCLPGFSGQNCE) constitute an EGF-like 6 domain. O-linked (Fuc...) threonine; alternate glycosylation occurs at Thr-231. O-linked (GalNAc...) threonine; alternate glycosylation is present at Thr-231. The EGF-like 7; calcium-binding domain occupies 256–292 (NIDDCPSNNCRNGGTCVDGVNTYNCQCPPDWTGQYCT). Residues 294 to 332 (DVDECQLMPNACQNGGTCHNTYGGYNCVCVNGWTGEDCS) enclose the EGF-like 8; calcium-binding domain. Residues 334 to 370 (NIDDCANAACHSGATCHDRVASFFCECPHGRTGLLCH) form the EGF-like 9; calcium-binding domain. In terms of domain architecture, EGF-like 10 spans 371–409 (LDNACISNPCNEGSNCDTNPVNGKAICTCPPGYTGPACN). The 39-residue stretch at 411–449 (DVDECSLGANPCEHGGRCTNTLGSFQCNCPQGYAGPRCE) folds into the EGF-like 11; calcium-binding domain. Ca(2+) contacts are provided by Thr-431 and Ser-434. Ser-434 is a glycosylation site (O-linked (Glc...) serine). Ca(2+) contacts are provided by Asp-451, Val-452, and Glu-454. The EGF-like 12; calcium-binding domain maps to 451–487 (DVNECLSNPCQNDATCLDQIGEFQCICMPGYEGLYCE). 3 disulfide bridges follow: Cys-455–Cys-466, Cys-460–Cys-475, and Cys-477–Cys-486. An O-linked (Glc...) serine glycan is attached at Ser-457. A glycan (O-linked (Fuc...) threonine) is linked at Thr-465. The Ca(2+) site is built by Asp-468 and Gln-469. Positions 489, 490, and 492 each coordinate Ca(2+). The EGF-like 13; calcium-binding domain maps to 489 to 525 (NIDECASNPCLHNGKCVDKINEFHCECPTGFNGNLCQ). 75 disulfides stabilise this stretch: Cys-493/Cys-504, Cys-498/Cys-513, Cys-515/Cys-524, Cys-531/Cys-542, Cys-536/Cys-551, Cys-553/Cys-562, Cys-569/Cys-579, Cys-574/Cys-588, Cys-590/Cys-599, Cys-606/Cys-617, Cys-611/Cys-626, Cys-628/Cys-637, Cys-644/Cys-654, Cys-649/Cys-663, Cys-665/Cys-674, Cys-681/Cys-692, Cys-686/Cys-701, Cys-703/Cys-712, Cys-719/Cys-729, Cys-724/Cys-738, Cys-740/Cys-749, Cys-756/Cys-767, Cys-761/Cys-776, Cys-778/Cys-787, Cys-794/Cys-805, Cys-799/Cys-814, Cys-816/Cys-825, Cys-832/Cys-843, Cys-837/Cys-854, Cys-856/Cys-865, Cys-872/Cys-883, Cys-877/Cys-892, Cys-894/Cys-903, Cys-910/Cys-921, Cys-915/Cys-930, Cys-932/Cys-941, Cys-948/Cys-959, Cys-953/Cys-968, Cys-970/Cys-979, Cys-986/Cys-997, Cys-991/Cys-1006, Cys-1008/Cys-1017, Cys-1024/Cys-1035, Cys-1029/Cys-1044, Cys-1046/Cys-1055, Cys-1062/Cys-1073, Cys-1067/Cys-1082, Cys-1084/Cys-1093, Cys-1100/Cys-1121, Cys-1115/Cys-1130, Cys-1132/Cys-1141, Cys-1148/Cys-1159, Cys-1153/Cys-1168, Cys-1170/Cys-1179, Cys-1186/Cys-1197, Cys-1191/Cys-1206, Cys-1208/Cys-1217, Cys-1224/Cys-1243, Cys-1237/Cys-1252, Cys-1254/Cys-1263, Cys-1270/Cys-1283, Cys-1275/Cys-1292, Cys-1294/Cys-1303, Cys-1310/Cys-1321, Cys-1315/Cys-1333, Cys-1335/Cys-1344, Cys-1351/Cys-1362, Cys-1356/Cys-1371, Cys-1373/Cys-1382, Cys-1390/Cys-1401, Cys-1395/Cys-1412, Cys-1414/Cys-1423, Cys-1447/Cys-1470, Cys-1452/Cys-1465, and Cys-1461/Cys-1477. Ser-495 is a glycosylation site (O-linked (Glc...) serine). Asp-506 and Lys-507 together coordinate Ca(2+). An EGF-like 14; calcium-binding domain is found at 527–563 (DVDECASTPCKNGAKCLDGPNSYTCQCTEGFTGRHCE). In terms of domain architecture, EGF-like 15; calcium-binding spans 565–600 (DINECIPDPCHYGTCKDGIATFTCLCRPGYTGRLCD). Residues 602–638 (DINECLSQPCQNGGQCTDRENGYICTCPKGTTGVNCE) enclose the EGF-like 16; calcium-binding domain. One can recognise an EGF-like 17; calcium-binding domain in the interval 640–675 (NLDDCASNPCDYGKCIDKIDGYECTCEPGYTGKMCN). In terms of domain architecture, EGF-like 18; calcium-binding spans 677 to 713 (NIDECASNPCRNGGTCKDKINGFTCVCPDGYHDHMCL). Residues 715–750 (EVNECNSNPCIHGTCHDGINGYKCDCDAGWSGSNCD) enclose the EGF-like 19; calcium-binding domain. The EGF-like 20; calcium-binding domain occupies 752–788 (NNNECESNPCMNGGTCKDMTGAYICTCRAGFSGPNCQ). In terms of domain architecture, EGF-like 21; calcium-binding spans 790 to 826 (NINECASNPCLNRGTCIDDVAGYKCNCMLPYTGAICE). The region spanning 828 to 866 (VLAPCSGSPCKNGGRCKESEDYETFSCECPPGWQGQTCE) is the EGF-like 22 domain. Residues 868–904 (DMNECVNRPCRNGAMCQNTNGSYKCNCKPGYAGRHCE) enclose the EGF-like 23; calcium-binding domain. N-linked (GlcNAc...) asparagine glycosylation is present at Asn-887. The 37-residue stretch at 906-942 (DIDDCQPNPCHNGGSCSDGINMFFCNCPAGFRGPKCE) folds into the EGF-like 24; calcium-binding domain. In terms of domain architecture, EGF-like 25; calcium-binding spans 944–980 (DINECASNPCKNGANCTDCVNSYTCTCQPGFSGIHCE). The N-linked (GlcNAc...) asparagine glycan is linked to Asn-958. The EGF-like 26 domain maps to 982–1018 (NTPDCTESSCFNGGTCIDGINTFSCQCPPGFTGNYCQ). In terms of domain architecture, EGF-like 27; calcium-binding spans 1020–1056 (DINECDSKPCLNGGTCQDSYGAYKCTCPQGYTGLNCQ). EGF-like domains follow at residues 1058-1094 (LVRW…VYCD) and 1096-1142 (PSVS…SYCE). The region spanning 1144-1180 (QVDECSPNPCQNGATCTDYLGGYSCECVAGYHGVNCS) is the EGF-like 30; calcium-binding domain. Residue Asn-1178 is glycosylated (N-linked (GlcNAc...) asparagine). The 37-residue stretch at 1182 to 1218 (EINECLSHPCHNGGTCIDLINTYKCSCPRGTQGVHCE) folds into the EGF-like 31; calcium-binding domain. The 45-residue stretch at 1220-1264 (NVDDCTPFYDSVSLEPKCFNNGKCFDRVGGYNCICPPGFVGERCE) folds into the EGF-like 32; calcium-binding domain. EGF-like domains are found at residues 1266–1304 (DVNE…RRCD), 1306–1345 (VVDG…ATCE), 1347–1383 (DART…ATCQ), and 1386–1424 (VVSP…LFCH). Thr-1400 carries O-linked (Fuc...) threonine; alternate glycosylation. Thr-1400 is a glycosylation site (O-linked (GalNAc...) threonine; alternate). 3 LNR repeats span residues 1447 to 1487 (CENE…PWKN), 1488 to 1529 (CTQS…CNPL), and 1530 to 1564 (YDQY…NMPE). Positions 1458, 1473, and 1476 each coordinate Ca(2+). N-linked (GlcNAc...) asparagine glycosylation is present at Asn-1487. Disulfide bonds link Cys-1488/Cys-1512, Cys-1494/Cys-1507, Cys-1503/Cys-1519, Cys-1534/Cys-1547, and Cys-1543/Cys-1559. Ca(2+) is bound at residue Asp-1500. Residue Asn-1508 is glycosylated (N-linked (GlcNAc...) asparagine). Ca(2+) is bound by residues Asp-1515, Asp-1518, Asp-1540, Asp-1555, and Asp-1558. Residue Asn-1584 is glycosylated (N-linked (GlcNAc...) asparagine). A helical transmembrane segment spans residues 1731 to 1751 (AMFSMLVIPLLIIFVIMVVIV). Topologically, residues 1752-2522 (NKKRRREHGQ…QRTHIPEAFK (771 aa)) are cytoplasmic. ANK repeat units follow at residues 1877-1920 (DGFT…QLHN), 1925-1954 (TGET…DANV), 1958-1988 (MGRT…DLDA), 1992-2021 (DGTT…DVNA), 2025-2054 (FGKS…NKDM), and 2058-2087 (KEET…NRDI). Disordered stretches follow at residues 2146 to 2229 (MKPS…MPLN), 2365 to 2404 (LMQA…PFCS), and 2449 to 2522 (LTPP…EAFK). A compositionally biased stretch (low complexity) spans 2184–2200 (SLLDSGSSGVLSPVDSL). A compositionally biased stretch (polar residues) spans 2218–2229 (SPFQQSPSMPLN). Residues 2365–2390 (LMQAQQMQQQQNLQLHQSVQQQQHQN) show a composition bias toward low complexity. 2 stretches are compositionally biased toward polar residues: residues 2391 to 2404 (SNAT…PFCS) and 2449 to 2469 (LTPP…SHQL). Low complexity predominate over residues 2479 to 2494 (PSPESPDQWSSSSPHS). Residues 2495–2514 (NMSDWSEGISSPPTSMQPQR) show a composition bias toward polar residues.

Belongs to the NOTCH family. O-glycosylated on the EGF-like domains. Contains both O-linked fucose and O-linked glucose. O-linked glycosylation by galnt11 is involved in determination of left/right symmetry: glycosylation promotes activation of notch1, possibly by promoting cleavage by adam17, modulating the balance between motile and immotile (sensory) cilia at the left-right organiser (LRO). In terms of processing, synthesized in the endoplasmic reticulum as an inactive form which is proteolytically cleaved by a furin-like convertase in the trans-Golgi network before it reaches the plasma membrane to yield an active, ligand-accessible form. Cleavage results in a C-terminal fragment N(TM) and a N-terminal fragment N(EC). Following ligand binding, it is cleaved by adam17 to yield a membrane-associated intermediate fragment called notch extracellular truncation (NEXT). Following endocytosis, this fragment is then cleaved by presenilin dependent gamma-secretase to release a Notch-derived peptide containing the intracellular domain (NICD) from the membrane.

It is found in the cell membrane. The protein localises to the nucleus. In terms of biological role, functions as a receptor for membrane-bound ligands Jagged-1 (JAG1), Jagged-2 (JAG2) and Delta-1 (DLL1) to regulate cell-fate determination. Upon ligand activation through the released notch intracellular domain (NICD) it forms a transcriptional activator complex with RBPJ/RBPSUH and activates genes of the enhancer of split locus. Affects the implementation of differentiation, proliferation and apoptotic programs. Involved in angiogenesis; negatively regulates endothelial cell proliferation and migration and angiogenic sprouting. Involved in the maturation of both CD4(+) and CD8(+) cells in the thymus. Important for follicular differentiation and possibly cell fate selection within the follicle. During cerebellar development, functions as a receptor for neuronal DNER and is involved in the differentiation of Bergmann glia. Represses neuronal and myogenic differentiation. May play an essential role in postimplantation development, probably in some aspect of cell specification and/or differentiation. May be involved in mesoderm development, somite formation and neurogenesis. Involved in determination of left/right symmetry by modulating the balance between motile and immotile (sensory) cilia at the left-right organiser (LRO). This chain is Neurogenic locus notch homolog protein 1 (notch1), found in Xenopus tropicalis (Western clawed frog).